A 111-amino-acid chain; its full sequence is Large ribosomal subunit protein uL29 (111 aa).

The segment at Met-1–Asn-85 is large ribosomal subunit protein uL29. A unknown region spans residues Ala-86 to Lys-111.

It belongs to the universal ribosomal protein uL29 family.

This is Large ribosomal subunit protein uL29 from Mycoplasma pneumoniae (strain ATCC 29342 / M129 / Subtype 1) (Mycoplasmoides pneumoniae).